A 104-amino-acid chain; its full sequence is UPF0213 protein PA3854 (104 aa).

Residues 13–88 enclose the GIY-YIG domain; the sequence is KCWSVYLVRA…KALSKRAKER (76 aa).

Belongs to the UPF0213 family.

The protein is UPF0213 protein PA3854 of Pseudomonas aeruginosa (strain ATCC 15692 / DSM 22644 / CIP 104116 / JCM 14847 / LMG 12228 / 1C / PRS 101 / PAO1).